Consider the following 310-residue polypeptide: tRNA uridine(34) hydroxylase (310 aa).

The region spanning 124–218 (SDPEVLLIDT…YFEEVAQEES (95 aa)) is the Rhodanese domain. Catalysis depends on cysteine 178, which acts as the Cysteine persulfide intermediate.

The protein belongs to the TrhO family.

The enzyme catalyses uridine(34) in tRNA + AH2 + O2 = 5-hydroxyuridine(34) in tRNA + A + H2O. Its function is as follows. Catalyzes oxygen-dependent 5-hydroxyuridine (ho5U) modification at position 34 in tRNAs. This Pseudomonas entomophila (strain L48) protein is tRNA uridine(34) hydroxylase.